The chain runs to 293 residues: Nucleotide-binding protein HRM2_27900 (293 aa).

11 to 18 (GLSGSGKS) lines the ATP pocket. 62–65 (DIRA) provides a ligand contact to GTP.

This sequence belongs to the RapZ-like family.

Its function is as follows. Displays ATPase and GTPase activities. This Desulforapulum autotrophicum (strain ATCC 43914 / DSM 3382 / VKM B-1955 / HRM2) (Desulfobacterium autotrophicum) protein is Nucleotide-binding protein HRM2_27900.